Consider the following 178-residue polypeptide: Protein GrpE (178 aa).

This sequence belongs to the GrpE family. In terms of assembly, homodimer.

Its subcellular location is the cytoplasm. Its function is as follows. Participates actively in the response to hyperosmotic and heat shock by preventing the aggregation of stress-denatured proteins, in association with DnaK and GrpE. It is the nucleotide exchange factor for DnaK and may function as a thermosensor. Unfolded proteins bind initially to DnaJ; upon interaction with the DnaJ-bound protein, DnaK hydrolyzes its bound ATP, resulting in the formation of a stable complex. GrpE releases ADP from DnaK; ATP binding to DnaK triggers the release of the substrate protein, thus completing the reaction cycle. Several rounds of ATP-dependent interactions between DnaJ, DnaK and GrpE are required for fully efficient folding. This Rickettsia akari (strain Hartford) protein is Protein GrpE.